Reading from the N-terminus, the 290-residue chain is Formamidopyrimidine-DNA glycosylase (290 aa).

Proline 2 functions as the Schiff-base intermediate with DNA in the catalytic mechanism. Glutamate 3 serves as the catalytic Proton donor. Catalysis depends on lysine 58, which acts as the Proton donor; for beta-elimination activity. DNA contacts are provided by histidine 97, arginine 122, and lysine 165. The FPG-type; atypical zinc-finger motif lies at 250–290 (KVYGREGEPCPGCDCDPVRTGGIARIVQSGRSTFYCPRHQR). Residue arginine 280 is the Proton donor; for delta-elimination activity of the active site.

This sequence belongs to the FPG family. Monomer. It depends on Zn(2+) as a cofactor.

The catalysed reaction is Hydrolysis of DNA containing ring-opened 7-methylguanine residues, releasing 2,6-diamino-4-hydroxy-5-(N-methyl)formamidopyrimidine.. The enzyme catalyses 2'-deoxyribonucleotide-(2'-deoxyribose 5'-phosphate)-2'-deoxyribonucleotide-DNA = a 3'-end 2'-deoxyribonucleotide-(2,3-dehydro-2,3-deoxyribose 5'-phosphate)-DNA + a 5'-end 5'-phospho-2'-deoxyribonucleoside-DNA + H(+). Its function is as follows. Involved in base excision repair of DNA damaged by oxidation or by mutagenic agents. Acts as a DNA glycosylase that recognizes and removes damaged bases. Has a preference for oxidized purines, such as 7,8-dihydro-8-oxoguanine (8-oxoG). Has AP (apurinic/apyrimidinic) lyase activity and introduces nicks in the DNA strand. Cleaves the DNA backbone by beta-delta elimination to generate a single-strand break at the site of the removed base with both 3'- and 5'-phosphates. In Rhodospirillum centenum (strain ATCC 51521 / SW), this protein is Formamidopyrimidine-DNA glycosylase.